The primary structure comprises 537 residues: Synaptotagmin-2 (537 aa).

Over 1–2 (MG) the chain is Cytoplasmic. Residues 3–23 (IISTILGVIGFGFGTTIGIVI) form a helical membrane-spanning segment. The Lumenal segment spans residues 24–537 (GYYLFIYFQS…QIELQWRNSS (514 aa)). The SMP-LTD domain occupies 67–249 (DFDRIDWLNK…WPKTLNVQIM (183 aa)). The interval 227–505 (QEIIKDQVAN…TLGYVVINLG (279 aa)) is phospholipid binding. 2 C2 domains span residues 240–362 (WPKT…LMTL) and 402–517 (DPNA…NDKY). Ca(2+)-binding residues include Asp276, Asp282, Asp332, and Glu334.

The protein belongs to the synaptotagmin family. It depends on Ca(2+) as a cofactor.

Its subcellular location is the golgi apparatus membrane. In terms of biological role, may play an important role in regulating an unconventional protein trafficking from the cytosol to the extracellular matrix. The sequence is that of Synaptotagmin-2 (SYT2) from Arabidopsis thaliana (Mouse-ear cress).